A 163-amino-acid chain; its full sequence is Transcriptional repressor NrdR (163 aa).

Residues 3–34 fold into a zinc finger; sequence CVQCGHLEDKVIDSRMSKDGTTIRRRRVCLRC. An ATP-cone domain is found at 49–139; the sequence is LRVVKRDNLR…VYRQFSNVEE (91 aa).

The protein belongs to the NrdR family. Requires Zn(2+) as cofactor.

Its function is as follows. Negatively regulates transcription of bacterial ribonucleotide reductase nrd genes and operons by binding to NrdR-boxes. This Akkermansia muciniphila (strain ATCC BAA-835 / DSM 22959 / JCM 33894 / BCRC 81048 / CCUG 64013 / CIP 107961 / Muc) protein is Transcriptional repressor NrdR.